The following is a 264-amino-acid chain: Ribosome-recycling factor, mitochondrial (264 aa).

This sequence belongs to the RRF family.

It is found in the mitochondrion. Functionally, necessary for protein synthesis in mitochondria. Functions as a ribosome recycling factor in mitochondria. The chain is Ribosome-recycling factor, mitochondrial (RRF1) from Yarrowia lipolytica (strain CLIB 122 / E 150) (Yeast).